Consider the following 546-residue polypeptide: Tryptophan biosynthesis protein TrpCD (546 aa).

The interval 1–226 (MMDFGFVDSL…FVQTVCGGEK (226 aa)) is indole-3-glycerol phosphate synthase. The interval 227-546 (MIEDVLRGLD…EEIACKSTSM (320 aa)) is anthranilate phosphoribosyltransferase. 5-phospho-alpha-D-ribose 1-diphosphate contacts are provided by residues glycine 295, 298–299 (GD), serine 303, 305–308 (NVST), 322–330 (KHGNRAVSS), and serine 334. Glycine 295 is an anthranilate binding site. Residue serine 307 participates in Mg(2+) binding. Residue asparagine 325 coordinates anthranilate. Residue arginine 380 participates in anthranilate binding. The Mg(2+) site is built by aspartate 437 and glutamate 438.

It in the N-terminal section; belongs to the TrpC family. In the C-terminal section; belongs to the anthranilate phosphoribosyltransferase family. The cofactor is Mg(2+).

The enzyme catalyses 1-(2-carboxyphenylamino)-1-deoxy-D-ribulose 5-phosphate + H(+) = (1S,2R)-1-C-(indol-3-yl)glycerol 3-phosphate + CO2 + H2O. It carries out the reaction N-(5-phospho-beta-D-ribosyl)anthranilate + diphosphate = 5-phospho-alpha-D-ribose 1-diphosphate + anthranilate. It functions in the pathway amino-acid biosynthesis; L-tryptophan biosynthesis; L-tryptophan from chorismate: step 2/5. It participates in amino-acid biosynthesis; L-tryptophan biosynthesis; L-tryptophan from chorismate: step 4/5. Its function is as follows. Bifunctional enzyme that catalyzes the second and fourth steps of tryptophan biosynthetic pathway. The second step is catalyzed by the anthranilate phosphoribosyltransferase, coded by the TrpD domain and the fourth step is catalyzed by indole-3-glycerol phosphate synthase, coded by the TrpC domain. The protein is Tryptophan biosynthesis protein TrpCD (trpCD) of Archaeoglobus fulgidus (strain ATCC 49558 / DSM 4304 / JCM 9628 / NBRC 100126 / VC-16).